A 36-amino-acid polypeptide reads, in one-letter code: Amanexitide proprotein 1 (36 aa).

Positions 1 to 10 (MSDINTARLP) are excised as a propeptide. The segment at residues 11–19 (VFSLPVFFP) is a cross-link (cyclopeptide (Val-Pro)). A propeptide spanning residues 20–36 (FVSDDIQAVLTRGESLC) is cleaved from the precursor.

It belongs to the MSDIN fungal toxin family. In terms of processing, processed by the macrocyclase-peptidase enzyme POPB to yield a toxic cyclic nonapeptide. POPB first removes 10 residues from the N-terminus. Conformational trapping of the remaining peptide forces the enzyme to release this intermediate rather than proceed to macrocyclization. The enzyme rebinds the remaining peptide in a different conformation and catalyzes macrocyclization of the N-terminal 9 residues. As to expression, expressed in basidiocarps.

Its function is as follows. Cyclic nonapeptide that belongs to the MSDIN-like toxin family responsible for a large number of food poisoning cases and deaths. In Amanita exitialis (Guangzhou destroying angel), this protein is Amanexitide proprotein 1.